A 198-amino-acid chain; its full sequence is Ribonuclease HII (198 aa).

The region spanning 10–198 (QLVAGVDEVG…PVKRALGLAS (189 aa)) is the RNase H type-2 domain. A divalent metal cation-binding residues include aspartate 16, glutamate 17, and aspartate 108.

Belongs to the RNase HII family. Mn(2+) is required as a cofactor. It depends on Mg(2+) as a cofactor.

It is found in the cytoplasm. It catalyses the reaction Endonucleolytic cleavage to 5'-phosphomonoester.. Its function is as follows. Endonuclease that specifically degrades the RNA of RNA-DNA hybrids. This chain is Ribonuclease HII, found in Shigella dysenteriae serotype 1 (strain Sd197).